We begin with the raw amino-acid sequence, 288 residues long: Bifunctional protein FolD (288 aa).

Residues 166–168 (GAS) and Ile-232 contribute to the NADP(+) site.

Belongs to the tetrahydrofolate dehydrogenase/cyclohydrolase family. In terms of assembly, homodimer.

It catalyses the reaction (6R)-5,10-methylene-5,6,7,8-tetrahydrofolate + NADP(+) = (6R)-5,10-methenyltetrahydrofolate + NADPH. It carries out the reaction (6R)-5,10-methenyltetrahydrofolate + H2O = (6R)-10-formyltetrahydrofolate + H(+). The protein operates within one-carbon metabolism; tetrahydrofolate interconversion. Its function is as follows. Catalyzes the oxidation of 5,10-methylenetetrahydrofolate to 5,10-methenyltetrahydrofolate and then the hydrolysis of 5,10-methenyltetrahydrofolate to 10-formyltetrahydrofolate. The chain is Bifunctional protein FolD from Klebsiella pneumoniae (strain 342).